A 398-amino-acid chain; its full sequence is Phospholipase C (398 aa).

The first 28 residues, 1-28 (MKRKICKALICATLATSLWAGASTKVYA), serve as a signal peptide directing secretion. The Zn(2+) site is built by Trp29, His39, Asp84, His96, His154, Asp158, His164, His176, and Glu180. Residues 29 to 278 (WDGKIDGTGT…HDVSEGNDPS (250 aa)) enclose the Zn-dependent PLC domain. Positions 275-283 (NDPSVGKNV) are linker. The 115-residue stretch at 284–398 (KELVAYISTS…ISGNSTYNIK (115 aa)) folds into the PLAT domain. Residues Asp297, Gly299, Thr300, Asp301, Asp321, Asn322, Gly324, Asn325, Asp326, Asp364, and Ala365 each contribute to the Ca(2+) site.

The protein belongs to the bacterial zinc-metallophospholipase C family. Ca(2+) is required as a cofactor. Requires Zn(2+) as cofactor.

It localises to the secreted. It carries out the reaction a 1,2-diacyl-sn-glycero-3-phosphocholine + H2O = phosphocholine + a 1,2-diacyl-sn-glycerol + H(+). Its function is as follows. Bacterial hemolysins are exotoxins that attack blood cell membranes and cause cell rupture. Constitutes an essential virulence factor in gas gangrene. Binds to eukaryotic membranes where it hydrolyzes both phosphatidylcholine and sphingomyelin. The diacylglycerol produced can activate both the arachidonic acid pathway, leading to modulation of the inflammatory response cascade and thrombosis, and protein kinase C, leading to activation of eukaryotic phospholipases and further membrane damage. Acts on human and mouse erythrocytes, but not on rabbit or horse erythrocytes. The chain is Phospholipase C (plc) from Clostridium perfringens (strain 13 / Type A).